The primary structure comprises 387 residues: uncharacterized protein (387 aa).

It belongs to the geranylgeranyl reductase family. ChlP subfamily.

This is an uncharacterized protein from Methanosarcina barkeri (strain Fusaro / DSM 804).